Here is a 162-residue protein sequence, read N- to C-terminus: uncharacterized protein (162 aa).

The signal sequence occupies residues methionine 1–alanine 24.

This is an uncharacterized protein from Mycobacterium bovis (strain ATCC BAA-935 / AF2122/97).